The sequence spans 231 residues: Cuticlin 2 (231 aa).

The first 16 residues, methionine 1–alanine 16, serve as a signal peptide directing secretion. Repeat copies occupy residues alanine 75–isoleucine 78, alanine 79–alanine 82, alanine 90–valine 93, alanine 105–isoleucine 108, alanine 114–alanine 117, alanine 121–valine 124, alanine 137–alanine 140, alanine 153–alanine 156, alanine 169–alanine 172, alanine 192–alanine 195, alanine 208–alanine 211, and alanine 218–alanine 221. The 12 X 4 AA repeats of A-A-P-[AVI] stretch occupies residues alanine 75 to alanine 221.

Post-translationally, tyrosine residues can be cross-linked in vitro, leading to the formation of insoluble high molecular-weight complexes.

It is found in the secreted. Component of the insoluble part of the cuticles. In Caenorhabditis elegans, this protein is Cuticlin 2.